Reading from the N-terminus, the 226-residue chain is Probable N-acetyl-alpha-D-glucosaminyl L-malate deacetylase 2 (226 aa).

The Zn(2+) site is built by histidine 13, aspartate 16, and histidine 127.

The protein belongs to the PIGL family. The cofactor is Zn(2+).

It carries out the reaction (S)-malyl N-acetyl-alpha-D-glucosaminide + H2O = (S)-malyl alpha-D-glucosaminide + acetate. Involved in bacillithiol (BSH) biosynthesis. Catalyzes the second step of the pathway, the deacetylation of N-acetylglucosaminylmalate (GlcNAc-Mal) to glucosamine malate (GlcN-Mal). Could also be involved in bacillithiol-detoxifying pathways through formation of S-mercapturic adducts. This chain is Probable N-acetyl-alpha-D-glucosaminyl L-malate deacetylase 2, found in Bacillus anthracis.